The chain runs to 325 residues: Necdin (325 aa).

Disordered regions lie at residues 1–69 and 77–96; these read MSEQ…IEDV and AAEEGRAHQPQSPARPIPAP. The MAGE domain maps to 102–301; the sequence is LVQKAHELMW…QAWPSRYREA (200 aa).

As to quaternary structure, binds to the transactivation domains of E2F1 and p53. Binds also SV40 large T antigen and adenovirus E1A. Interacts with nucleobindin 1 and 2. Brain specific. Not detected in other tissues. Expressed in postmitotic neurons. In adult brain the highest expression is in hypothalamus. Highly expressed in thalamus and midbrain. Relatively low levels are in cerebral cortex, hippocampus, striatum, olfactory bulb, cerebellum, pons and spinal cord. Also detected in neurally differentiated embryonal carcinoma cells.

It localises to the cytoplasm. The protein resides in the nucleus. It is found in the nucleoplasm. The protein localises to the nucleus matrix. Functionally, growth suppressor that facilitates the entry of the cell into cell cycle arrest. Functionally similar to the retinoblastoma protein it binds to and represses the activity of cell-cycle-promoting proteins such as SV40 large T antigen, adenovirus E1A, and the transcription factor E2F. Necdin also interacts with p53 and works in an additive manner to inhibit cell growth. Also functions as a transcription factor and directly binds to specific guanosine-rich DNA sequences. The chain is Necdin (Ndn) from Mus musculus (Mouse).